Reading from the N-terminus, the 388-residue chain is Xylose isomerase (388 aa).

Active-site residues include His54 and Asp57. Glu181, Glu217, His220, Asp245, Asp255, Asp257, and Asp287 together coordinate Mg(2+).

The protein belongs to the xylose isomerase family. In terms of assembly, homotetramer. The cofactor is Mg(2+).

The protein resides in the cytoplasm. The catalysed reaction is alpha-D-xylose = alpha-D-xylulofuranose. The chain is Xylose isomerase from Streptomyces olivaceoviridis (Streptomyces corchorusii).